The primary structure comprises 107 residues: Large ribosomal subunit protein uL24 (107 aa).

The protein belongs to the universal ribosomal protein uL24 family. Part of the 50S ribosomal subunit.

One of two assembly initiator proteins, it binds directly to the 5'-end of the 23S rRNA, where it nucleates assembly of the 50S subunit. In terms of biological role, one of the proteins that surrounds the polypeptide exit tunnel on the outside of the subunit. The protein is Large ribosomal subunit protein uL24 of Thermoanaerobacter pseudethanolicus (strain ATCC 33223 / 39E) (Clostridium thermohydrosulfuricum).